A 324-amino-acid chain; its full sequence is Tubulin alpha-8 chain (324 aa).

GTP-binding residues include S15, G19, T20, T54, N81, and N103. E129 is a catalytic residue.

The protein belongs to the tubulin family. In terms of assembly, dimer of alpha and beta chains. A typical microtubule is a hollow water-filled tube with an outer diameter of 25 nm and an inner diameter of 15 nM. Alpha-beta heterodimers associate head-to-tail to form protofilaments running lengthwise along the microtubule wall with the beta-tubulin subunit facing the microtubule plus end conferring a structural polarity. Microtubules usually have 13 protofilaments but different protofilament numbers can be found in some organisms and specialized cells. Mg(2+) is required as a cofactor. Some glutamate residues at the C-terminus are polyglycylated, resulting in polyglycine chains on the gamma-carboxyl group. Glycylation is mainly limited to tubulin incorporated into axonemes (cilia and flagella) whereas glutamylation is prevalent in neuronal cells, centrioles, axonemes, and the mitotic spindle. Both modifications can coexist on the same protein on adjacent residues, and lowering polyglycylation levels increases polyglutamylation, and reciprocally. The precise function of polyglycylation is still unclear. In terms of processing, some glutamate residues at the C-terminus are polyglutamylated, resulting in polyglutamate chains on the gamma-carboxyl group. Polyglutamylation plays a key role in microtubule severing by spastin (SPAST). SPAST preferentially recognizes and acts on microtubules decorated with short polyglutamate tails: severing activity by SPAST increases as the number of glutamates per tubulin rises from one to eight, but decreases beyond this glutamylation threshold.

The protein resides in the cytoplasm. Its subcellular location is the cytoskeleton. It catalyses the reaction GTP + H2O = GDP + phosphate + H(+). Its function is as follows. Tubulin is the major constituent of microtubules, a cylinder consisting of laterally associated linear protofilaments composed of alpha- and beta-tubulin heterodimers. Microtubules grow by the addition of GTP-tubulin dimers to the microtubule end, where a stabilizing cap forms. Below the cap, tubulin dimers are in GDP-bound state, owing to GTPase activity of alpha-tubulin. The protein is Tubulin alpha-8 chain of Gallus gallus (Chicken).